The sequence spans 427 residues: Gamma-glutamyl phosphate reductase (427 aa).

The protein belongs to the gamma-glutamyl phosphate reductase family.

It is found in the cytoplasm. It catalyses the reaction L-glutamate 5-semialdehyde + phosphate + NADP(+) = L-glutamyl 5-phosphate + NADPH + H(+). It participates in amino-acid biosynthesis; L-proline biosynthesis; L-glutamate 5-semialdehyde from L-glutamate: step 2/2. In terms of biological role, catalyzes the NADPH-dependent reduction of L-glutamate 5-phosphate into L-glutamate 5-semialdehyde and phosphate. The product spontaneously undergoes cyclization to form 1-pyrroline-5-carboxylate. This chain is Gamma-glutamyl phosphate reductase, found in Rhizobium johnstonii (strain DSM 114642 / LMG 32736 / 3841) (Rhizobium leguminosarum bv. viciae).